Consider the following 302-residue polypeptide: Adipolin (302 aa).

The N-terminal stretch at 1–20 (MRRWAWAAVVVLLGPQLVLL) is a signal peptide. Disordered stretches follow at residues 28–68 (EAQR…GPEF) and 86–110 (ALRKRCGSRDKKPRDLFGPPGPPGA). A glycan (N-linked (GlcNAc...) asparagine) is linked at asparagine 43. Residues 86–100 (ALRKRCGSRDKKPRD) show a composition bias toward basic and acidic residues. A C1q domain is found at 147–302 (LRLVGEAFHC…SSFSGLLLGT (156 aa)).

Belongs to the adipolin/erythroferrone family. As to quaternary structure, homomultimer; disulfide-linked. May interact with ERFE. Processed into Adipolin fC1QTNF12 and Adipolin gC1QTNF12 by FURIN. Insulin enhances endogenous C1QTNF12 cleavage. In terms of tissue distribution, predominantly expressed by adipose tissues.

It is found in the secreted. Its function is as follows. Insulin-sensitizing adipocyte-secreted protein (adipokine) that regulates glucose metabolism in liver and adipose tissue. Promotes glucose uptake in adipocytes and suppresses de novo glucose production in hepatocytes via the PI3K-Akt signaling pathway. Administration lead to reduction of blood glucose. Able to attenuate inflammation in fat tissue. This Homo sapiens (Human) protein is Adipolin.